Consider the following 361-residue polypeptide: Cobalt-precorrin-5B C(1)-methyltransferase (361 aa).

Belongs to the CbiD family.

It carries out the reaction Co-precorrin-5B + S-adenosyl-L-methionine = Co-precorrin-6A + S-adenosyl-L-homocysteine. Its pathway is cofactor biosynthesis; adenosylcobalamin biosynthesis; cob(II)yrinate a,c-diamide from sirohydrochlorin (anaerobic route): step 6/10. Its function is as follows. Catalyzes the methylation of C-1 in cobalt-precorrin-5B to form cobalt-precorrin-6A. The protein is Cobalt-precorrin-5B C(1)-methyltransferase of Methanobrevibacter smithii (strain ATCC 35061 / DSM 861 / OCM 144 / PS).